The sequence spans 472 residues: Clampless protein 1 (472 aa).

N-linked (GlcNAc...) asparagine glycans are attached at residues asparagine 70 and asparagine 296.

Functionally, required for developmental progression after cells of opposite mating types fuse with one another, essential for processes common to both dikaryotic filament formation and monokaryotic fruiting. A direct target for transcription factors Sxi1-alpha and Sxi2-a. The polypeptide is Clampless protein 1 (Cryptococcus neoformans var. neoformans serotype D (strain B-3501A) (Filobasidiella neoformans)).